The primary structure comprises 232 residues: Flagellar L-ring protein (232 aa).

Positions 1–15 are cleaved as a signal peptide; sequence MKKVLFYVLPFAFFG. Residue Cys-16 is the site of N-palmitoyl cysteine attachment. Cys-16 carries S-diacylglycerol cysteine lipidation.

Belongs to the FlgH family. In terms of assembly, the basal body constitutes a major portion of the flagellar organelle and consists of four rings (L,P,S, and M) mounted on a central rod.

Its subcellular location is the cell outer membrane. It is found in the bacterial flagellum basal body. Assembles around the rod to form the L-ring and probably protects the motor/basal body from shearing forces during rotation. This Campylobacter jejuni subsp. jejuni serotype O:6 (strain 81116 / NCTC 11828) protein is Flagellar L-ring protein.